We begin with the raw amino-acid sequence, 930 residues long: Protein translocase subunit SecA (930 aa).

ATP-binding positions include glutamine 87, 105–109 (GEGKT), and aspartate 515. The Zn(2+) site is built by cysteine 914, cysteine 916, cysteine 925, and histidine 926.

The protein belongs to the SecA family. Monomer and homodimer. Part of the essential Sec protein translocation apparatus which comprises SecA, SecYEG and auxiliary proteins SecDF-YajC and YidC. It depends on Zn(2+) as a cofactor.

It localises to the cell inner membrane. It is found in the cytoplasm. It carries out the reaction ATP + H2O + cellular proteinSide 1 = ADP + phosphate + cellular proteinSide 2.. In terms of biological role, part of the Sec protein translocase complex. Interacts with the SecYEG preprotein conducting channel. Has a central role in coupling the hydrolysis of ATP to the transfer of proteins into and across the cell membrane, serving both as a receptor for the preprotein-SecB complex and as an ATP-driven molecular motor driving the stepwise translocation of polypeptide chains across the membrane. This Burkholderia vietnamiensis (strain G4 / LMG 22486) (Burkholderia cepacia (strain R1808)) protein is Protein translocase subunit SecA.